The primary structure comprises 209 residues: Large ribosomal subunit protein uL3 (209 aa).

Belongs to the universal ribosomal protein uL3 family. As to quaternary structure, part of the 50S ribosomal subunit. Forms a cluster with proteins L14 and L19.

One of the primary rRNA binding proteins, it binds directly near the 3'-end of the 23S rRNA, where it nucleates assembly of the 50S subunit. The protein is Large ribosomal subunit protein uL3 of Clostridium botulinum (strain Okra / Type B1).